The chain runs to 432 residues: Glucose-6-phosphate isomerase (432 aa).

The active-site Proton donor is the E283. Active-site residues include H304 and K418.

It belongs to the GPI family.

The protein resides in the cytoplasm. It catalyses the reaction alpha-D-glucose 6-phosphate = beta-D-fructose 6-phosphate. The protein operates within carbohydrate biosynthesis; gluconeogenesis. Its pathway is carbohydrate degradation; glycolysis; D-glyceraldehyde 3-phosphate and glycerone phosphate from D-glucose: step 2/4. Its function is as follows. Catalyzes the reversible isomerization of glucose-6-phosphate to fructose-6-phosphate. This chain is Glucose-6-phosphate isomerase, found in Rubrobacter xylanophilus (strain DSM 9941 / JCM 11954 / NBRC 16129 / PRD-1).